Consider the following 1579-residue polypeptide: Pentafunctional AROM polypeptide (1579 aa).

Positions 1-391 (MKVELSKVPI…YGTSAHVVSD (391 aa)) are 3-dehydroquinate synthase. NAD(+) is bound by residues 44 to 46 (DTN), 79 to 82 (EAHK), 110 to 112 (GGV), and aspartate 115. Arginine 126 provides a ligand contact to 7-phospho-2-dehydro-3-deoxy-D-arabino-heptonate. NAD(+) is bound at residue 135–136 (TS). Aspartate 142 and lysine 148 together coordinate 7-phospho-2-dehydro-3-deoxy-D-arabino-heptonate. Lysine 157 is an NAD(+) binding site. Asparagine 158 is a 7-phospho-2-dehydro-3-deoxy-D-arabino-heptonate binding site. Residues 175–178 (WLET) and asparagine 186 each bind NAD(+). Zn(2+) is bound at residue glutamate 190. Residues 190–193 (EVIK) and lysine 257 contribute to the 7-phospho-2-dehydro-3-deoxy-D-arabino-heptonate site. Glutamate 267 functions as the Proton acceptor; for 3-dehydroquinate synthase activity in the catalytic mechanism. 7-phospho-2-dehydro-3-deoxy-D-arabino-heptonate contacts are provided by residues 271 to 275 (RNLLN) and histidine 278. Histidine 278 is a binding site for Zn(2+). Histidine 282 acts as the Proton acceptor; for 3-dehydroquinate synthase activity in catalysis. Histidine 294 and lysine 363 together coordinate 7-phospho-2-dehydro-3-deoxy-D-arabino-heptonate. Histidine 294 contributes to the Zn(2+) binding site. An EPSP synthase region spans residues 404–862 (VYPFKTLENG…WDVLHTQLGA (459 aa)). The For EPSP synthase activity role is filled by cysteine 844. The tract at residues 881–1070 (SIVIIGMRAA…IPTNRSSFVC (190 aa)) is shikimate kinase. 886-893 (GMRAAGKT) is a binding site for ATP. Positions 1071–1283 (LTFDDLAAHK…SAPGQLTLSQ (213 aa)) are 3-dehydroquinase. The Proton acceptor; for 3-dehydroquinate dehydratase activity role is filled by histidine 1188. Lysine 1217 functions as the Schiff-base intermediate with substrate; for 3-dehydroquinate dehydratase activity in the catalytic mechanism. The interval 1296–1579 (AKNFYVVGSP…IYSAVTEEQA (284 aa)) is shikimate dehydrogenase.

In the N-terminal section; belongs to the sugar phosphate cyclases superfamily. Dehydroquinate synthase family. This sequence in the 2nd section; belongs to the EPSP synthase family. The protein in the 3rd section; belongs to the shikimate kinase family. It in the 4th section; belongs to the type-I 3-dehydroquinase family. In the C-terminal section; belongs to the shikimate dehydrogenase family. As to quaternary structure, homodimer. Requires Zn(2+) as cofactor.

It is found in the cytoplasm. It catalyses the reaction 7-phospho-2-dehydro-3-deoxy-D-arabino-heptonate = 3-dehydroquinate + phosphate. It carries out the reaction 3-dehydroquinate = 3-dehydroshikimate + H2O. The enzyme catalyses shikimate + NADP(+) = 3-dehydroshikimate + NADPH + H(+). The catalysed reaction is shikimate + ATP = 3-phosphoshikimate + ADP + H(+). It catalyses the reaction 3-phosphoshikimate + phosphoenolpyruvate = 5-O-(1-carboxyvinyl)-3-phosphoshikimate + phosphate. It functions in the pathway metabolic intermediate biosynthesis; chorismate biosynthesis; chorismate from D-erythrose 4-phosphate and phosphoenolpyruvate: step 2/7. Its pathway is metabolic intermediate biosynthesis; chorismate biosynthesis; chorismate from D-erythrose 4-phosphate and phosphoenolpyruvate: step 3/7. It participates in metabolic intermediate biosynthesis; chorismate biosynthesis; chorismate from D-erythrose 4-phosphate and phosphoenolpyruvate: step 4/7. The protein operates within metabolic intermediate biosynthesis; chorismate biosynthesis; chorismate from D-erythrose 4-phosphate and phosphoenolpyruvate: step 5/7. It functions in the pathway metabolic intermediate biosynthesis; chorismate biosynthesis; chorismate from D-erythrose 4-phosphate and phosphoenolpyruvate: step 6/7. Its function is as follows. The AROM polypeptide catalyzes 5 consecutive enzymatic reactions in prechorismate polyaromatic amino acid biosynthesis. This Lachancea thermotolerans (strain ATCC 56472 / CBS 6340 / NRRL Y-8284) (Yeast) protein is Pentafunctional AROM polypeptide.